The primary structure comprises 147 residues: Ponticulin-like protein C2 (147 aa).

The N-terminal stretch at 1-20 is a signal peptide; the sequence is MKFTKPLLLLIVAIIASSNA. Asparagine 118 is lipidated: GPI-like-anchor amidated asparagine. An N-linked (GlcNAc...) asparagine glycan is attached at asparagine 118. Residues 119 to 147 constitute a propeptide, removed in mature form; it reads SSESDSSDSTRIGASFALFALALLSMLAL.

The protein belongs to the ponticulin family. In terms of processing, the GPI-like-anchor contains a phosphoceramide group, rather than a phosphatidyl group.

The protein resides in the cell membrane. This Dictyostelium discoideum (Social amoeba) protein is Ponticulin-like protein C2 (ponC2).